The chain runs to 119 residues: Large ribosomal subunit protein uL22 (119 aa).

This sequence belongs to the universal ribosomal protein uL22 family. Part of the 50S ribosomal subunit.

Its function is as follows. This protein binds specifically to 23S rRNA; its binding is stimulated by other ribosomal proteins, e.g. L4, L17, and L20. It is important during the early stages of 50S assembly. It makes multiple contacts with different domains of the 23S rRNA in the assembled 50S subunit and ribosome. In terms of biological role, the globular domain of the protein is located near the polypeptide exit tunnel on the outside of the subunit, while an extended beta-hairpin is found that lines the wall of the exit tunnel in the center of the 70S ribosome. In Chlorobium phaeovibrioides (strain DSM 265 / 1930) (Prosthecochloris vibrioformis (strain DSM 265)), this protein is Large ribosomal subunit protein uL22.